The chain runs to 468 residues: Tumor necrosis factor receptor superfamily member 10A (468 aa).

Positions 1 to 23 (MAPPPARVHLGAFLAVTPNPGSA) are cleaved as a signal peptide. A disordered region spans residues 17-82 (TPNPGSAASG…APGPRPAREA (66 aa)). The segment covering 20 to 34 (PGSAASGTEAAAATP) has biased composition (low complexity). The Extracellular segment spans residues 24-239 (ASGTEAAAAT…VHKESGNGHN (216 aa)). Position 52 is an omega-N-methylarginine (Arg-52). Residues 63-74 (GPSARARAGRAP) are compositionally biased toward low complexity. TNFR-Cys repeat units follow at residues 107–145 (SAAT…PGAC), 147–188 (RCTE…NTAC), and 189–229 (QCKP…DIEC). 7 disulfides stabilise this stretch: Cys-132-Cys-145, Cys-148-Cys-164, Cys-167-Cys-180, Cys-170-Cys-188, Cys-190-Cys-204, Cys-207-Cys-221, and Cys-211-Cys-229. Asn-156 carries N-linked (GlcNAc...) asparagine glycosylation. Residues 240–262 (IWVILVVTLVVPLLLVAVLIVCC) traverse the membrane as a helical segment. Residues 263–468 (CIGSGCGGDP…DGTGSAVSLE (206 aa)) are Cytoplasmic-facing. The 84-residue stretch at 365–448 (MLFFDKFANI…HAREKIQDLL (84 aa)) folds into the Death domain. Ser-424, Ser-463, and Ser-466 each carry phosphoserine.

In terms of assembly, monomer. Homooligomers and heterooligomers with TNFRSF10B. Three TNFRSF10A molecules interact with the TNFSF10 homotrimer. Can interact with TRADD and RIPK1. Interacts with ARAP1. In the absence of stimulation, interacts with BIRC2, DDX3X and GSK3B. The interaction with BIRC2 and DDX3X is further enhanced upon receptor stimulation and accompanied by DDX3X and BIRC2 cleavage. Interacts with ZDHHC3. Interacts with PTPN6; this interaction enables the inhibition of T-cell receptor signaling via LCK. As to quaternary structure, (Microbial infection) Interacts with HCMV protein UL141; this interaction prevents TNFRSF10A cell surface expression. In terms of processing, palmitoylated. Palmitoylation of TNFRSF10A is required for its association with lipid rafts, oligomerization and function in TRAIL-induced cell death. Palmitoylated by ZDHHC3. Widely expressed. High levels are found in spleen, peripheral blood leukocytes, small intestine and thymus, but also in K-562 erythroleukemia cells, MCF-7 breast carcinoma cells and activated T-cells.

It is found in the cell membrane. Its subcellular location is the membrane raft. The protein resides in the cytoplasm. The protein localises to the cytosol. Functionally, receptor for the cytotoxic ligand TNFSF10/TRAIL. The adapter molecule FADD recruits caspase-8 to the activated receptor. The resulting death-inducing signaling complex (DISC) performs caspase-8 proteolytic activation which initiates the subsequent cascade of caspases (aspartate-specific cysteine proteases) mediating apoptosis. Promotes the activation of NF-kappa-B. The polypeptide is Tumor necrosis factor receptor superfamily member 10A (TNFRSF10A) (Homo sapiens (Human)).